Consider the following 363-residue polypeptide: 3-dehydroquinate synthase (363 aa).

NAD(+) contacts are provided by residues 103-107 (GAVGD), 127-128 (TT), K139, K148, and 166-169 (FSET). 3 residues coordinate Zn(2+): E181, H243, and H260.

It belongs to the sugar phosphate cyclases superfamily. Dehydroquinate synthase family. Co(2+) is required as a cofactor. The cofactor is Zn(2+). It depends on NAD(+) as a cofactor.

The protein localises to the cytoplasm. The enzyme catalyses 7-phospho-2-dehydro-3-deoxy-D-arabino-heptonate = 3-dehydroquinate + phosphate. The protein operates within metabolic intermediate biosynthesis; chorismate biosynthesis; chorismate from D-erythrose 4-phosphate and phosphoenolpyruvate: step 2/7. Catalyzes the conversion of 3-deoxy-D-arabino-heptulosonate 7-phosphate (DAHP) to dehydroquinate (DHQ). The protein is 3-dehydroquinate synthase of Lysinibacillus sphaericus (strain C3-41).